Here is a 185-residue protein sequence, read N- to C-terminus: MIDDILLESEERMTSSVEHAREDLTTIRTGRANPSMFNGVVAEYYGVPTPITQMATISVPEPRMLLIKPYEQSTMDAIENAIRNSDLGVNPTNDGQVLRVTIPQLTEERRKEMVKVAKSKGEDAKIAIRNIRRKGMEQLGKIQKDGEAGEDEVRAAEKDLEKITHSYVEQVDSLVEAKEKELLEV.

Belongs to the RRF family.

It localises to the cytoplasm. Its function is as follows. Responsible for the release of ribosomes from messenger RNA at the termination of protein biosynthesis. May increase the efficiency of translation by recycling ribosomes from one round of translation to another. The chain is Ribosome-recycling factor from Corynebacterium jeikeium (strain K411).